The sequence spans 63 residues: Large ribosomal subunit protein uL30 (63 aa).

The protein belongs to the universal ribosomal protein uL30 family. In terms of assembly, part of the 50S ribosomal subunit.

This chain is Large ribosomal subunit protein uL30, found in Rickettsia prowazekii (strain Madrid E).